Consider the following 93-residue polypeptide: Small ribosomal subunit protein uS19c (93 aa).

This sequence belongs to the universal ribosomal protein uS19 family.

Its subcellular location is the plastid. The protein resides in the chloroplast. Protein S19 forms a complex with S13 that binds strongly to the 16S ribosomal RNA. This Lolium perenne (Perennial ryegrass) protein is Small ribosomal subunit protein uS19c.